The sequence spans 195 residues: Holliday junction branch migration complex subunit RuvA (195 aa).

Residues 1–64 (MIASIRGVIQ…EDALTLYGFS (64 aa)) are domain I. Residues 65–139 (DNAQRSLFEQ…GKIDFRQLAA (75 aa)) are domain II. Positions 139 to 143 (ASGST) are flexible linker. The interval 144 to 195 (SVSALDRELSEILVSLGYSAAEAAAAIASLPSDAPPTLEERLRLALRYFGSA) is domain III.

This sequence belongs to the RuvA family. In terms of assembly, homotetramer. Forms an RuvA(8)-RuvB(12)-Holliday junction (HJ) complex. HJ DNA is sandwiched between 2 RuvA tetramers; dsDNA enters through RuvA and exits via RuvB. An RuvB hexamer assembles on each DNA strand where it exits the tetramer. Each RuvB hexamer is contacted by two RuvA subunits (via domain III) on 2 adjacent RuvB subunits; this complex drives branch migration. In the full resolvosome a probable DNA-RuvA(4)-RuvB(12)-RuvC(2) complex forms which resolves the HJ.

Its subcellular location is the cytoplasm. In terms of biological role, the RuvA-RuvB-RuvC complex processes Holliday junction (HJ) DNA during genetic recombination and DNA repair, while the RuvA-RuvB complex plays an important role in the rescue of blocked DNA replication forks via replication fork reversal (RFR). RuvA specifically binds to HJ cruciform DNA, conferring on it an open structure. The RuvB hexamer acts as an ATP-dependent pump, pulling dsDNA into and through the RuvAB complex. HJ branch migration allows RuvC to scan DNA until it finds its consensus sequence, where it cleaves and resolves the cruciform DNA. The protein is Holliday junction branch migration complex subunit RuvA of Chloroflexus aggregans (strain MD-66 / DSM 9485).